We begin with the raw amino-acid sequence, 64 residues long: Large ribosomal subunit protein bL33 (64 aa).

This sequence belongs to the bacterial ribosomal protein bL33 family.

The sequence is that of Large ribosomal subunit protein bL33 from Nostoc punctiforme (strain ATCC 29133 / PCC 73102).